Reading from the N-terminus, the 427-residue chain is Enolase (427 aa).

Gln-163 provides a ligand contact to (2R)-2-phosphoglycerate. Glu-205 functions as the Proton donor in the catalytic mechanism. Residues Asp-242, Glu-285, and Asp-312 each contribute to the Mg(2+) site. Residues Lys-337, Arg-366, Ser-367, and Lys-388 each contribute to the (2R)-2-phosphoglycerate site. The active-site Proton acceptor is Lys-337.

This sequence belongs to the enolase family. It depends on Mg(2+) as a cofactor.

It is found in the cytoplasm. The protein resides in the secreted. The protein localises to the cell surface. The enzyme catalyses (2R)-2-phosphoglycerate = phosphoenolpyruvate + H2O. The protein operates within carbohydrate degradation; glycolysis; pyruvate from D-glyceraldehyde 3-phosphate: step 4/5. Its function is as follows. Catalyzes the reversible conversion of 2-phosphoglycerate (2-PG) into phosphoenolpyruvate (PEP). It is essential for the degradation of carbohydrates via glycolysis. This chain is Enolase, found in Paraburkholderia phymatum (strain DSM 17167 / CIP 108236 / LMG 21445 / STM815) (Burkholderia phymatum).